Here is a 564-residue protein sequence, read N- to C-terminus: Diacylglycerol kinase epsilon (564 aa).

Residues 20 to 40 traverse the membrane as a helical segment; that stretch reads LVLWTLCSVLLPVFITLWCSL. Phorbol-ester/DAG-type zinc fingers lie at residues 57–106 and 121–174; these read KHCW…RFPC and PHHW…SEKC. The DAGKc domain maps to 212–353; sequence KQWTPLIILA…LDRWKVQVTN (142 aa).

Belongs to the eukaryotic diacylglycerol kinase family. As to expression, highly expressed in brain and heart. In brain, highly expressed in Purkinje cells of the cerebellum, pyramidal cells of the hippocampus, mitral cells of the olfactory bulb, and neurons of the substantia nigra. Lower expression in neurons of the thalamus, superior olive, and lateral reticular nucleus is also detected. Expressed in platelets.

The protein resides in the membrane. Its subcellular location is the cytoplasm. It catalyses the reaction a 1,2-diacyl-sn-glycerol + ATP = a 1,2-diacyl-sn-glycero-3-phosphate + ADP + H(+). The catalysed reaction is 1-hexadecanoyl-2-(5Z,8Z,11Z,14Z-eicosatetraenoyl)-sn-glycerol + ATP = 1-hexadecanoyl-2-(5Z,8Z,11Z,14Z-eicosatetraenoyl)-sn-glycero-3-phosphate + ADP + H(+). The enzyme catalyses 1-octadecanoyl-2-(5Z,8Z,11Z,14Z-eicosatetraenoyl)-sn-glycerol + ATP = 1-octadecanoyl-2-(5Z,8Z,11Z,14Z-eicosatetraenoyl)-sn-glycero-3-phosphate + ADP + H(+). It carries out the reaction 1-eicosanoyl-2-(5Z,8Z,11Z,14Z)-eicosatetraenoyl-sn-glycerol + ATP = 1-eicosanoyl-2-(5Z,8Z,11Z,14Z)-eicosatetraenoyl-sn-glycero-3-phosphate + ADP + H(+). It catalyses the reaction 1,2-di-(5Z,8Z,11Z,14Z)-eicosatetraenoyl-sn-glycerol + ATP = 1,2-di-(5Z,8Z,11Z,14Z)-eicosatetraenoyl-sn-glycero-3-phosphate + ADP + H(+). The catalysed reaction is 1-octadecanoyl-2-(9Z,12Z)-octadecadienoyl-sn-glycerol + ATP = 1-octadecanoyl-2-(9Z,12Z-octadecadienoyl)-sn-glycero-3-phosphate + ADP + H(+). The enzyme catalyses 1,2-di-(9Z,12Z-octadecadienoyl)-sn-glycerol + ATP = 1,2-di-(9Z,12Z-octadecadienoyl)-sn-glycero-3-phosphate + ADP + H(+). It carries out the reaction 1,2-di-(9Z-octadecenoyl)-sn-glycerol + ATP = 1,2-di-(9Z-octadecenoyl)-sn-glycero-3-phosphate + ADP + H(+). It participates in lipid metabolism; glycerolipid metabolism. Its function is as follows. Membrane-bound diacylglycerol kinase that converts diacylglycerol/DAG into phosphatidic acid/phosphatidate/PA and regulates the respective levels of these two bioactive lipids. Thereby, acts as a central switch between the signaling pathways activated by these second messengers with different cellular targets and opposite effects in numerous biological processes. Also plays an important role in the biosynthesis of complex lipids. Displays specificity for diacylglycerol substrates with an arachidonoyl acyl chain at the sn-2 position, with the highest activity toward 1-octadecanoyl-2-(5Z,8Z,11Z,14Z-eicosatetraenoyl)-sn-glycerol the main diacylglycerol intermediate within the phosphatidylinositol turnover cycle. Can also phosphorylate diacylglycerol substrates with a linoleoyl acyl chain at the sn-2 position but much less efficiently. The protein is Diacylglycerol kinase epsilon (Dgke) of Mus musculus (Mouse).